Reading from the N-terminus, the 356-residue chain is L-amino acid-D/L-Glu epimerase (356 aa).

Substrate contacts are provided by residues Arg-25, Ser-136, and 161–163 (KVK). Asp-191 lines the Mg(2+) pocket. A substrate-binding site is contributed by Asn-193. Positions 219 and 244 each coordinate Mg(2+). Substrate is bound by residues Lys-268, 296–298 (CMM), and 320–322 (DLD).

This sequence belongs to the mandelate racemase/muconate lactonizing enzyme family. Requires Mg(2+) as cofactor.

Its function is as follows. Catalyzes the epimerization of dipeptides with L-Glu in the second position. Has epimerase activity with L-Ala-L-Glu, L-Pro-L-Glu, L-Val-L-Glu, L-Thr-L-Glu and L-Met-L-Glu (in vitro). The polypeptide is L-amino acid-D/L-Glu epimerase (Francisella philomiragia subsp. philomiragia (strain ATCC 25017 / CCUG 19701 / FSC 153 / O#319-036)).